An 8922-amino-acid polypeptide reads, in one-letter code: Protein clarinet (8922 aa).

The interval 11–35 (SKGPPLEEVREESEEDAQVPEQVVS) is disordered. Positions 19-28 (VREESEEDAQ) are enriched in acidic residues. Residues 385–405 (KDETKLILKSVEDKLETTEIE) adopt a coiled-coil conformation. Disordered stretches follow at residues 527–579 (QEAA…EPEL), 622–673 (IVIS…EPEL), 687–860 (LAEK…KEPE), 880–955 (SFEQ…EPEL), 971–1049 (EQSS…EPEL), 1062–1139 (SSAE…MESR), 1151–1331 (IARI…EPEL), 1347–1420 (EQSS…VMES), 1444–1520 (SFEQ…PELT), 1538–1619 (SFEQ…EEID), 1632–1710 (SFEQ…LTQE), 1726–1801 (SFEQ…VPEL), 1820–1898 (SFEQ…LTQE), 1939–1992 (VISE…LTQE), 2032–2084 (IVIS…SELT), 2126–2175 (IVIS…SKEP), 2194–2213 (QSSF…PVRL), 2220–2246 (IVIS…YDQD), 2329–2403 (SFEQ…KKPE), 2423–2497 (SFEQ…KPEL), 2516–2594 (SFEQ…LTQE), 2610–2684 (SFEQ…KEPE), 2704–2845 (SFEQ…ERPF), 2892–2963 (SFEQ…MESK), 2983–3155 (EQSS…EPEL), 3171–3249 (EQSS…EPEL), 3268–3337 (SFEQ…PVML), 3619–3639 (SITP…PTTD), 3995–4079 (AEPV…QEEI), 4117–4169 (IVIS…PELT), 4181–4271 (SLAE…STTI), 4557–4624 (QASA…TQEE), 4636–4656 (EQSS…PVRL), 4666–4685 (SEQH…YERS), 4730–4801 (EQSS…GVTQ), 4855–4899 (PANP…PLQD), 5004–5036 (PEDF…NGLT), 5360–5379 (LAMF…RKES), 5390–5413 (RRSS…DTAL), 5484–5511 (KKQI…ENEV), 5540–5572 (PPIA…SQFG), 6194–6303 (AEPV…ESES), 6354–6437 (DVES…GSRM), 6487–6510 (SSKS…QIGI), 6577–6609 (ARFP…LDDL), 6668–6691 (NAET…SVAR), 6728–6768 (AEFE…VPPG), 6998–7018 (TERK…TSTS), 7045–7098 (ARSR…DDFD), 7137–7175 (FDGD…FEKP), 7202–7263 (EAPS…YPDR), 7313–7350 (KTTT…EIEE), 7598–7623 (DSVR…SPGM), 7760–7797 (TRRH…SRPT), and 7842–7881 (HIRQ…SSSV). The span at 531-552 (SDNHEKERSSATSKADYERSFD) shows a compositional bias: basic and acidic residues. Residues 760 to 776 (MESKEPELTQEEIDHIA) are compositionally biased toward basic and acidic residues. The segment covering 1062-1076 (SSAEQSSFEQASTVP) has biased composition (low complexity). The span at 1230 to 1244 (MESKEPELTQEEIDH) shows a compositional bias: basic and acidic residues. Over residues 1251 to 1261 (IAEQSSFEQAS) the composition is skewed to polar residues. 2 stretches are compositionally biased toward basic and acidic residues: residues 1606–1619 (MESK…EEID) and 1700–1710 (MESKEPELTQE). Composition is skewed to basic and acidic residues over residues 1888–1898 (MESKEPELTQE) and 1982–1992 (MESKESELTQE). Polar residues predominate over residues 2194–2204 (QSSFEQASTIT). Residues 2584 to 2594 (MESKEPELTQE) show a composition bias toward basic and acidic residues. The segment covering 2772 to 2788 (MESKEPELTQEEIDHIA) has biased composition (basic and acidic residues). The segment covering 2793–2803 (LAEQSSFEQAS) has biased composition (polar residues). The span at 3076–3085 (APSSSFEQAS) shows a compositional bias: polar residues. Positions 4035-4044 (GTSFPDNAET) are enriched in polar residues. Over residues 4065–4079 (PVMKSKEPELTQEEI) the composition is skewed to basic and acidic residues. 3 stretches are compositionally biased toward polar residues: residues 4182–4195 (LAEQ…STIP), 4223–4234 (SATSGADYQQSF), and 4255–4271 (MEST…STTI). A compositionally biased stretch (basic and acidic residues) spans 4571–4580 (IVEKREDDKS). A compositionally biased stretch (polar residues) spans 4581–4594 (NITSGADYQQSFDQ). Positions 4613–4624 (MESKEPELTQEE) are enriched in basic and acidic residues. The segment covering 4636-4645 (EQSSFEQAST) has biased composition (polar residues). The span at 4730–4739 (EQSSFEQAST) shows a compositional bias: polar residues. Residues 4871 to 4890 (EGSSSATSGADIPSSFDISS) are compositionally biased toward low complexity. Positions 5009–5023 (EATSGADTESISETT) are enriched in polar residues. The span at 5390-5407 (RRSSGADSRASNDSSASR) shows a compositional bias: low complexity. Positions 5486–5499 (QISSRTESTNSRVS) are enriched in polar residues. The span at 5540 to 5550 (PPIAISHPTPP) shows a compositional bias: pro residues. A compositionally biased stretch (low complexity) spans 5560–5572 (RHSSGSSAHSQFG). Composition is skewed to polar residues over residues 6225 to 6245 (ASSG…TSGF) and 6270 to 6284 (KTVS…MASR). Composition is skewed to basic and acidic residues over residues 6285–6303 (KSSE…ESES) and 6376–6422 (GEGE…EESL). Residues 6494–6505 (LGTSAPTKSIPS) are compositionally biased toward polar residues. Residues 6590–6600 (SPSVMSSSIMS) show a composition bias toward low complexity. Residues 6670–6687 (ETDSSSSVITSRQPSRSP) show a composition bias toward polar residues. Low complexity predominate over residues 6735–6747 (SQVPSRQPSRSPS). 2 stretches are compositionally biased toward basic and acidic residues: residues 6998–7008 (TERKQREESPT) and 7045–7069 (ARSR…HTPE). Low complexity predominate over residues 7071-7086 (SSTAVVTDVPSVSPVT). Positions 7155 to 7175 (TTKKTSDFDFPKETDEVFEKP) are enriched in basic and acidic residues. The segment covering 7248–7260 (SDEESCSEDDEEY) has biased composition (acidic residues). The span at 7313-7331 (KTTTSQTPSTSTKPTVTAP) shows a compositional bias: low complexity. The segment covering 7599-7609 (SVRDDNERNEN) has biased composition (basic and acidic residues). Low complexity-rich tracts occupy residues 7777-7788 (SSASRPPSAAGS) and 7854-7880 (AQTG…GSSS). Positions 7895-7915 (KKELKDVLIQRKQRLEATEIE) form a coiled coil. The interval 8510–8562 (SRRRAQETALTSSNKISTGSRSYARRPIRPSSYRNPEATNSMPDRHVARRTAE) is disordered. Composition is skewed to polar residues over residues 8517–8530 (TALT…TGSR) and 8541–8551 (SYRNPEATNSM). Basic and acidic residues predominate over residues 8552 to 8562 (PDRHVARRTAE). In terms of domain architecture, PDZ spans 8570-8661 (RILLTRSYKH…EIEMVIRTYK (92 aa)). The 122-residue stretch at 8714–8835 (CHGHIQVSLG…SAINTGPRWY (122 aa)) folds into the C2 domain.

As to expression, expressed in the nervous system.

The protein resides in the synapse. It localises to the cell projection. The protein localises to the axon. Functionally, required for synapse development in the active zone of presynaptic terminals of specific neurons including serotonergic NSM neurons. The active zone is a protein-dense neuronal region within the presynaptic bouton, from which synaptic vesicles send neurotransmitter signals across the synapse. Plays a role in the recruitment and clustering of synaptic vesicles in the active zone of presynaptic terminals in serotonergic NSM neurons, and coordinates the release of synaptic vesicles at presynaptic terminals to regulate neurotransmission at neuromuscular junctions. Regulates synapse number in inhibitory motor neurons and plays a role in spontaneous postsynaptic synaptic vesicle release in muscle cells. This is Protein clarinet from Caenorhabditis elegans.